The sequence spans 189 residues: GTP cyclohydrolase 1 (189 aa).

Zn(2+) contacts are provided by Cys-78, His-81, and Cys-150.

This sequence belongs to the GTP cyclohydrolase I family. Homomer.

The catalysed reaction is GTP + H2O = 7,8-dihydroneopterin 3'-triphosphate + formate + H(+). It participates in cofactor biosynthesis; 7,8-dihydroneopterin triphosphate biosynthesis; 7,8-dihydroneopterin triphosphate from GTP: step 1/1. This Bacillus mycoides (strain KBAB4) (Bacillus weihenstephanensis) protein is GTP cyclohydrolase 1.